Here is a 622-residue protein sequence, read N- to C-terminus: Prothrombin (622 aa).

The N-terminal stretch at Met1–Ser24 is a signal peptide. Positions Gln25 to Arg43 are excised as a propeptide. The Gla domain maps to Ala44–Ala89. Residues Glu49, Glu50, Glu57, Glu59, Glu62, Glu63, Glu68, Glu69, Glu72, and Glu75 each carry the 4-carboxyglutamate modification. Cys60 and Cys65 are disulfide-bonded. Disulfide bonds link Cys90–Cys103, Cys108–Cys186, Cys129–Cys169, Cys157–Cys181, Cys213–Cys291, Cys234–Cys274, Cys262–Cys286, Cys336–Cys482, Cys391–Cys407, Cys536–Cys550, and Cys564–Cys594. Kringle domains are found at residues Cys108 to Cys186 and Cys213 to Cys291. Residues Asn121 and Asn143 are each glycosylated (N-linked (GlcNAc...) (complex) asparagine). The Peptidase S1 domain maps to Ile364–Asp618. His406 acts as the Charge relay system in catalysis. The N-linked (GlcNAc...) (complex) asparagine glycan is linked to Asn416. Catalysis depends on Asp462, which acts as the Charge relay system. The tract at residues Ala551 to Val573 is high affinity receptor-binding region which is also known as the TP508 peptide. Ser568 acts as the Charge relay system in catalysis.

This sequence belongs to the peptidase S1 family. In terms of assembly, heterodimer (named alpha-thrombin) of a light and a heavy chain; disulfide-linked. Forms a heterodimer with SERPINA5. In plasma, interacts (via N-terminus) with alpha-1-microglobulin with molar ratio 1:2 and 1:1; this interaction does not prevent the activation of prothrombin to thrombin. Interacts (thrombin) with iripin-8, a serine protease inhibitor from Ixodes ricinus saliva. Interacts (thrombin) with iripin-3, a serine protease inhibitor from Ixodes ricinus saliva. Interacts (thrombin) with Anopheles albimanus salivary thrombin inhibitor anophelin; the interaction results in thrombin inhibition. Interacts (thrombin) with Anopheles gambiae salivary thrombin inhibitor anophelin; the interaction results in thrombin inhibition. Interacts (thrombin) with Amblyomma variegatum variegin; the interaction results in thrombin inhibition. Interacts (thrombin) with Xenopsylla cheopis salivary thrombin inhibitor XC-42. Interacts (thrombin) with Xenopsylla cheopis salivary thrombin inhibitor XC-43. Post-translationally, the gamma-carboxyglutamyl residues, which bind calcium ions, result from the carboxylation of glutamyl residues by a microsomal enzyme, the vitamin K-dependent carboxylase. The modified residues are necessary for the calcium-dependent interaction with a negatively charged phospholipid surface, which is essential for the conversion of prothrombin to thrombin. N-glycosylated. N-glycan heterogeneity at Asn-121: Hex3HexNAc3 (minor), Hex4HexNAc3 (minor) and Hex5HexNAc4 (major). At Asn-143: Hex4HexNAc3 (minor) and Hex5HexNAc4 (major). In terms of processing, in the penultimate step of the coagulation cascade, prothrombin is converted to thrombin by the prothrombinase complex composed of factor Xa (F10), cofactor Va (F5), and phospholipids. This activation requires factor Xa-catalyzed sequential cleavage at 2 sites, Arg-314 and Arg-363, along 2 possible pathways. In the first pathway, the first cleavage occurs at Arg-314, leading to the formation of the inactive intermediate prethrombin-2. This pathway preferentially occurs on platelets and in the absence of cofactor Va. In the second pathway, the first cleavage occurs at Arg-363, which separates protease domain into 2 chains that remain connected through a disulfide bond and generates the active intermediate meizothrombin. The presence of cofactor Va directs activation along the meizothrombin pathway and greatly accelerates the rate of cleavage at Arg-363, but has a smaller effect on the cleavage of meizothrombin at Arg-314. Meizothrombin accumulates as an intermediate when prothrombinase is assembled on the membrane of red blood cells. Expressed by the liver and secreted in plasma.

It is found in the secreted. The protein localises to the extracellular space. The enzyme catalyses Selective cleavage of Arg-|-Gly bonds in fibrinogen to form fibrin and release fibrinopeptides A and B.. With respect to regulation, activity is promoted in the presence of negatively charged surfaces, such as polyphosphate and dextran sulfate. Inhibited by SERPINA5. In terms of biological role, thrombin, which cleaves bonds after Arg and Lys, converts fibrinogen to fibrin and activates factors V, VII, VIII, XIII, and, in complex with thrombomodulin, protein C. Functions in blood homeostasis, inflammation and wound healing. Activates coagulation factor XI (F11); activation is promoted by the contact with negatively charged surfaces. Triggers the production of pro-inflammatory cytokines, such as MCP-1/CCL2 and IL8/CXCL8, in endothelial cells. The sequence is that of Prothrombin (F2) from Homo sapiens (Human).